Reading from the N-terminus, the 458-residue chain is Mitochondrial distribution and morphology protein 10 (458 aa).

Residues 307-339 (LDQRRTEPLDAPNTNSSVFSKERVQKKQGPKED) are disordered. Positions 326–339 (SKERVQKKQGPKED) are enriched in basic and acidic residues.

It belongs to the MDM10 family. As to quaternary structure, component of the ER-mitochondria encounter structure (ERMES) or MDM complex, composed of MMM1, MDM10, MDM12 and MDM34. Associates with the mitochondrial outer membrane sorting assembly machinery SAM(core) complex.

It localises to the mitochondrion outer membrane. Its function is as follows. Component of the ERMES/MDM complex, which serves as a molecular tether to connect the endoplasmic reticulum and mitochondria. Components of this complex are involved in the control of mitochondrial shape and protein biogenesis and may function in phospholipid exchange. MDM10 is involved in the late assembly steps of the general translocase of the mitochondrial outer membrane (TOM complex). Functions in the TOM40-specific route of the assembly of outer membrane beta-barrel proteins, including the association of TOM40 with the receptor TOM22 and small TOM proteins. Can associate with the SAM(core) complex as well as the MDM12-MMM1 complex, both involved in late steps of the major beta-barrel assembly pathway, that is responsible for biogenesis of all outer membrane beta-barrel proteins. May act as a switch that shuttles between both complexes and channels precursor proteins into the TOM40-specific pathway. Plays a role in mitochondrial morphology and in the inheritance of mitochondria. The sequence is that of Mitochondrial distribution and morphology protein 10 from Lachancea thermotolerans (strain ATCC 56472 / CBS 6340 / NRRL Y-8284) (Yeast).